A 2017-amino-acid polypeptide reads, in one-letter code: Protein cbp-1 (2017 aa).

Residues 1–13 are compositionally biased toward basic and acidic residues; sequence MDEPPSKKSRADS. The disordered stretch occupies residues 1-182; sequence MDEPPSKKSR…PGMFQGDQQQ (182 aa). Composition is skewed to low complexity over residues 21 to 30 and 78 to 90; these read ALSALESLEA and QPGQ…PPQN. A compositionally biased stretch (polar residues) spans 106–116; it reads NPSQTSNNSPR. A compositionally biased stretch (low complexity) spans 141 to 151; that stretch reads MMSPPSMGRVP. Residues 152-164 are compositionally biased toward pro residues; the sequence is GPSPGGPQPPGPG. Low complexity predominate over residues 165 to 182; that stretch reads QPQMRPGQPGMFQGDQQQ. Symmetric dimethylarginine; by PRMT5; in vitro is present on Arg234. The interval 307–398 is disordered; sequence SNGQPIRGPN…PGSSMLATHQ (92 aa). Residues 340–379 show a composition bias toward low complexity; it reads QAAAAQHAAQQQAAAQAQAQAAAQQQQQQQREQEAAAAAQ. The segment at 399–505 adopts a TAZ-type 1 zinc-finger fold; sequence DPEKRKLIQQ…REDCPVCKPL (107 aa). Disordered stretches follow at residues 558–593 and 706–864; these read EGFN…DMPD and GRSD…DTVF. The span at 559-573 shows a compositional bias: low complexity; it reads GFNGNPFQNGPNRGG. The KIX domain maps to 593-672; the sequence is DCTKEWHHQV…KIYKIQKELQ (80 aa). The segment covering 721–773 has biased composition (polar residues); sequence PSQQNQPWGGAPNSNMHQQIPPNGQVPQVNNSSTFPSSGNSTPNIGASSTVSA. Residues 834-854 are compositionally biased toward basic and acidic residues; that stretch reads KDTKDGVAESKPKEQQAKREP. The Bromo domain maps to 864–970; it reads FSQEDLIKFL…EMFVSEMDPV (107 aa). Interaction with histone regions lie at residues 902–948 and 1224–1226; these read DYHE…YNRK and YLD. The CBP/p300-type HAT domain maps to 1112 to 1492; that stretch reads KYLASKLPHN…LAYSLHETDS (381 aa). Acetyl-CoA is bound by residues 1225–1227, 1237–1238, Ile1284, Arg1289, and Trp1293; these read LDS and RT. The span at 1349–1358 shows a compositional bias: basic and acidic residues; the sequence is NEEAQRKVKE. Positions 1349–1401 are disordered; it reads NEEAQRKVKEDDDDGEDADGGLGGGDSGKKKSSKNKKNNLKKNAKMNKKKAGS. A compositionally biased stretch (basic residues) spans 1378-1399; that stretch reads KKSSKNKKNNLKKNAKMNKKKA. The ZZ-type zinc finger occupies 1494 to 1540; that stretch reads GMEYTCNKCSSPAVWHCQSCDDFDLCDGCKPTTQHPHEMEKIKSLIG. Residues Cys1499, Cys1502, Cys1510, Cys1513, Cys1519, Cys1522, His1528, and His1530 each coordinate Zn(2+). Residues 1550-1631 form a TAZ-type 2 zinc finger; the sequence is GGTRYESIQR…ACTVPFCMNI (82 aa). Disordered regions lie at residues 1656-1828 and 1908-2017; these read GLQS…QPVR and SQMS…AGGQ. Residues 1667-1678 show a composition bias toward polar residues; that stretch reads TPSTVSNGTPSN. Positions 1699-1708 are enriched in low complexity; it reads QVQMQQHQGS. The segment covering 1748–1757 has biased composition (polar residues); the sequence is PQMNANQSRY. Composition is skewed to low complexity over residues 1793-1812 and 1908-1932; these read MNPQ…QNPG and SQMS…QAGA. Residues 1943–1962 are compositionally biased toward polar residues; that stretch reads QNNSQPRAPSGQFASMNPSM. Low complexity predominate over residues 1963-2017; sequence QQQYPQQQQGWPQQRQQNPGGMQQNANPYNQFQNRQNMMMMPQQQQPHPSNAGGQ.

Interacts (via N-terminus domain and HAT domain) with prmt-5; the interaction results in methylation of cbp-1. Interacts (via HAT domain) with cep-1; cep-1 transcriptional activity may be inhibited by interaction with methylated cbp-1. Component of a complex that contains prmt-5 and cbp-1. In terms of processing, methylation by prmt-5 may repress the capacity of cbp-1 to enhance cep-1-dependent transcription of egl-1.

It localises to the nucleus. It catalyses the reaction L-lysyl-[protein] + acetyl-CoA = N(6)-acetyl-L-lysyl-[protein] + CoA + H(+). Its function is as follows. Acetyltransferase enzyme. Acetylates histones, giving a specific tag for transcriptional activation. May prevent DNA damage-induced apoptosis by inhibiting cep-1-dependent transcription activation of the programmed cell death activator egl-1. In differentiated cells, negatively regulates localization of heterochromatin to the nuclear periphery. Plays a role in migration of gonadal distal tip cells, where it probably modulates expression of genes involved in integrin-mediated adhesion. In Caenorhabditis elegans, this protein is Protein cbp-1 (cbp-1).